A 111-amino-acid polypeptide reads, in one-letter code: Cytochrome c 2.1 (111 aa).

The residue at position 2 (S2) is an N-acetylserine. 4 residues coordinate heme c: C20, C23, H24, and M85.

This sequence belongs to the cytochrome c family. Binds 1 heme c group covalently per subunit.

The protein localises to the mitochondrion intermembrane space. Functionally, electron carrier protein. The oxidized form of the cytochrome c heme group can accept an electron from the heme group of the cytochrome c1 subunit of cytochrome reductase. Cytochrome c then transfers this electron to the cytochrome oxidase complex, the final protein carrier in the mitochondrial electron-transport chain. This Caenorhabditis elegans protein is Cytochrome c 2.1 (cyc-2.1).